Consider the following 144-residue polypeptide: Large ribosomal subunit protein uL15 (144 aa).

The span at 1 to 14 (MKLHELKPNEGARD) shows a compositional bias: basic and acidic residues. Positions 1–43 (MKLHELKPNEGARDVRKRVGRGTSSGTGKTAGRGQKGQKARSK) are disordered. Gly residues predominate over residues 23-35 (TSSGTGKTAGRGQ).

This sequence belongs to the universal ribosomal protein uL15 family. Part of the 50S ribosomal subunit.

Its function is as follows. Binds to the 23S rRNA. The sequence is that of Large ribosomal subunit protein uL15 from Latilactobacillus sakei subsp. sakei (strain 23K) (Lactobacillus sakei subsp. sakei).